The primary structure comprises 83 residues: Neurotoxin LmNaTx34.5 (83 aa).

Positions 1-15 (FILVVIALMVIEVKS) are cleaved as a signal peptide. An LCN-type CS-alpha/beta domain is found at 16-82 (DGYLMVRAGR…IWTYEKNTCS (67 aa)). Cystine bridges form between Cys29–Cys81, Cys33–Cys54, Cys40–Cys61, and Cys44–Cys63.

Belongs to the long (4 C-C) scorpion toxin superfamily. Sodium channel inhibitor family. Beta subfamily. In terms of tissue distribution, expressed by the venom gland.

It localises to the secreted. In terms of biological role, binds voltage-independently at site-4 of sodium channels (Nav) and shift the voltage of activation toward more negative potentials thereby affecting sodium channel activation and promoting spontaneous and repetitive firing. This chain is Neurotoxin LmNaTx34.5, found in Lychas mucronatus (Chinese swimming scorpion).